The following is a 337-amino-acid chain: Large ribosomal subunit protein uL3 (337 aa).

Residues 1-20 (MASIHRPKRGSLAFSPRKRA) are disordered.

It belongs to the universal ribosomal protein uL3 family. In terms of assembly, part of the 50S ribosomal subunit. Forms a cluster with proteins L14 and L24e.

In terms of biological role, one of the primary rRNA binding proteins, it binds directly near the 3'-end of the 23S rRNA, where it nucleates assembly of the 50S subunit. This Methanosarcina mazei (strain ATCC BAA-159 / DSM 3647 / Goe1 / Go1 / JCM 11833 / OCM 88) (Methanosarcina frisia) protein is Large ribosomal subunit protein uL3.